The sequence spans 389 residues: 8-amino-7-oxononanoate synthase (389 aa).

Arg31 is a substrate binding site. Residue 109–110 (GY) participates in pyridoxal 5'-phosphate binding. Substrate is bound at residue His134. Residues Ser180, 205-208 (DEAH), and 236-239 (TLSK) each bind pyridoxal 5'-phosphate. Lys239 is modified (N6-(pyridoxal phosphate)lysine). Thr349 is a binding site for substrate.

The protein belongs to the class-II pyridoxal-phosphate-dependent aminotransferase family. BioF subfamily. Homodimer. Pyridoxal 5'-phosphate serves as cofactor.

The catalysed reaction is 6-carboxyhexanoyl-[ACP] + L-alanine + H(+) = (8S)-8-amino-7-oxononanoate + holo-[ACP] + CO2. The protein operates within cofactor biosynthesis; biotin biosynthesis. Functionally, catalyzes the decarboxylative condensation of pimeloyl-[acyl-carrier protein] and L-alanine to produce 8-amino-7-oxononanoate (AON), [acyl-carrier protein], and carbon dioxide. The sequence is that of 8-amino-7-oxononanoate synthase from Mycobacterium marinum (strain ATCC BAA-535 / M).